Here is a 99-residue protein sequence, read N- to C-terminus: Pterin-4-alpha-carbinolamine dehydratase (99 aa).

Belongs to the pterin-4-alpha-carbinolamine dehydratase family.

It carries out the reaction (4aS,6R)-4a-hydroxy-L-erythro-5,6,7,8-tetrahydrobiopterin = (6R)-L-erythro-6,7-dihydrobiopterin + H2O. Its function is as follows. Involved in tetrahydrobiopterin biosynthesis. The polypeptide is Pterin-4-alpha-carbinolamine dehydratase (pcbd) (Dictyostelium discoideum (Social amoeba)).